A 247-amino-acid chain; its full sequence is Cell division protein ZapD (247 aa).

Belongs to the ZapD family. In terms of assembly, interacts with FtsZ.

It is found in the cytoplasm. In terms of biological role, cell division factor that enhances FtsZ-ring assembly. Directly interacts with FtsZ and promotes bundling of FtsZ protofilaments, with a reduction in FtsZ GTPase activity. The chain is Cell division protein ZapD from Enterobacter sp. (strain 638).